A 200-amino-acid chain; its full sequence is Large ribosomal subunit protein uL4 (200 aa).

The disordered stretch occupies residues 38–72 (GRQGTKQQKTRSDVAGGGKRPWRQKGTGRARAGTT).

This sequence belongs to the universal ribosomal protein uL4 family. In terms of assembly, part of the 50S ribosomal subunit.

Its function is as follows. One of the primary rRNA binding proteins, this protein initially binds near the 5'-end of the 23S rRNA. It is important during the early stages of 50S assembly. It makes multiple contacts with different domains of the 23S rRNA in the assembled 50S subunit and ribosome. Forms part of the polypeptide exit tunnel. The protein is Large ribosomal subunit protein uL4 of Pseudomonas putida (strain ATCC 700007 / DSM 6899 / JCM 31910 / BCRC 17059 / LMG 24140 / F1).